The chain runs to 375 residues: o-succinylbenzoate synthase (375 aa).

Lysine 166 acts as the Proton donor in catalysis. Residues aspartate 191, glutamate 216, and aspartate 241 each contribute to the Mg(2+) site. The active-site Proton acceptor is lysine 265.

It belongs to the mandelate racemase/muconate lactonizing enzyme family. MenC type 2 subfamily. Homotetramer. It depends on a divalent metal cation as a cofactor.

It carries out the reaction (1R,6R)-6-hydroxy-2-succinyl-cyclohexa-2,4-diene-1-carboxylate = 2-succinylbenzoate + H2O. The catalysed reaction is N-acetyl-D-methionine = N-acetyl-L-methionine. It catalyses the reaction N-acetyl-D-phenylalanine = N-acetyl-L-phenylalanine. Its pathway is quinol/quinone metabolism; 1,4-dihydroxy-2-naphthoate biosynthesis; 1,4-dihydroxy-2-naphthoate from chorismate: step 4/7. The protein operates within quinol/quinone metabolism; menaquinone biosynthesis. Its function is as follows. Converts 2-succinyl-6-hydroxy-2,4-cyclohexadiene-1-carboxylate (SHCHC) to 2-succinylbenzoate (OSB). Also acts as a N-succinylamino acid racemase (NSAR) that catalyzes the racemization of various N-succinylamino acids, including N-succinyl-alanine and N-succinyl-phenylalanine. Can catalyze the racemization of a broad range of N-acylamino acids, including N-acetyl-methionine, N-acetyl-phenylalanine, N-carbamoyl-methionine, N-formyl-D-methionine, N-formyl-D-norleucine and N-carbamoyl-D-norleucine. May be a bifunctional enzyme involved in menaquinone biosynthesis and in an irreversible pathway for the conversion of D- to L-amino acids, thereby facilitating the survival and/or growth of the organism. In Geobacillus kaustophilus, this protein is o-succinylbenzoate synthase.